The primary structure comprises 249 residues: Proteasome subunit alpha type-7-B (249 aa).

The protein belongs to the peptidase T1A family. The 26S proteasome consists of a 20S proteasome core and two 19S regulatory subunits. The 20S proteasome core is composed of 28 subunits that are arranged in four stacked rings, resulting in a barrel-shaped structure. The two end rings are each formed by seven alpha subunits, and the two central rings are each formed by seven beta subunits. The catalytic chamber with the active sites is on the inside of the barrel.

The protein resides in the cytoplasm. It is found in the nucleus. Its function is as follows. The proteasome is a multicatalytic proteinase complex which is characterized by its ability to cleave peptides with Arg, Phe, Tyr, Leu, and Glu adjacent to the leaving group at neutral or slightly basic pH. The proteasome has an ATP-dependent proteolytic activity. The chain is Proteasome subunit alpha type-7-B (PAD1) from Oryza sativa subsp. indica (Rice).